The sequence spans 237 residues: Ribosomal RNA small subunit methyltransferase G (237 aa).

S-adenosyl-L-methionine contacts are provided by residues glycine 72, leucine 77, 123-124, and arginine 138; that span reads AE. The interval 210 to 237 is disordered; it reads TALETGTKAAPSRSPRKPGGRKKRGRKR. Residues 223–237 show a composition bias toward basic residues; sequence SPRKPGGRKKRGRKR.

It belongs to the methyltransferase superfamily. RNA methyltransferase RsmG family.

Its subcellular location is the cytoplasm. Its function is as follows. Specifically methylates the N7 position of guanine in position 518 of 16S rRNA. This Thermobifida fusca (strain YX) protein is Ribosomal RNA small subunit methyltransferase G.